Here is a 167-residue protein sequence, read N- to C-terminus: UPF0225 protein VP1145 (167 aa).

The protein belongs to the UPF0225 family.

This chain is UPF0225 protein VP1145, found in Vibrio parahaemolyticus serotype O3:K6 (strain RIMD 2210633).